A 395-amino-acid polypeptide reads, in one-letter code: Sensor protein DltS (395 aa).

The next 2 membrane-spanning stretches (helical) occupy residues 9-29 (FVFLTMSILIVVVLFLFAVSN) and 136-156 (FLILVFTIFGFCLLAAVSLYL). One can recognise a Histidine kinase domain in the interval 177–387 (DASHELKTPI…RLEVQLPIDG (211 aa)). His-180 is subject to Phosphohistidine; by autocatalysis.

It is found in the cell membrane. It carries out the reaction ATP + protein L-histidine = ADP + protein N-phospho-L-histidine.. In terms of biological role, member of the two-component regulatory system DltS/DltR. Regulates the expression of the dlt operon. Probably phosphorylates DltR. The chain is Sensor protein DltS (dltS) from Streptococcus agalactiae serotype III (strain NEM316).